The following is a 58-amino-acid chain: Large ribosomal subunit protein eL24 (58 aa).

Zn(2+)-binding residues include C6, C9, C32, and C36. Residues 6–36 (CSFCGYDIEPGTGKMYVRRDGRVFYFCSGKC) form a C4-type zinc finger.

The protein belongs to the eukaryotic ribosomal protein eL24 family. In terms of assembly, part of the 50S ribosomal subunit. Forms a cluster with proteins L3 and L14. It depends on Zn(2+) as a cofactor.

Binds to the 23S rRNA. The sequence is that of Large ribosomal subunit protein eL24 from Archaeoglobus fulgidus (strain ATCC 49558 / DSM 4304 / JCM 9628 / NBRC 100126 / VC-16).